Reading from the N-terminus, the 242-residue chain is Response regulator GtcR (242 aa).

The 114-residue stretch at 4–117 folds into the Response regulatory domain; sequence TILIADDEPE…EAVARIQAQL (114 aa). A 4-aspartylphosphate modification is found at Asp53. The segment at residues 133-233 is a DNA-binding region (ompR/PhoB-type); that stretch reads TQSTTVGRLT…VRGLGYKFAS (101 aa).

Phosphorylated by GtcS.

Its function is as follows. Member of the two-component regulatory system GtcS/GtcR which may act in the control of the transcription of the grs operon which encodes the multienzymes involved in the biosynthesis of the peptide antibiotic gramicidin S. The polypeptide is Response regulator GtcR (gtcR) (Aneurinibacillus migulanus (Bacillus migulanus)).